The chain runs to 325 residues: Outer spore wall protein LDS1 (325 aa).

Over 1 to 91 (MSFTGSLALA…NTNKSSYSTT (91 aa)) the chain is Cytoplasmic. Residues 92–112 (MLGILSSYLIMFALVSFVYWA) traverse the membrane as a helical segment. Residues 113-118 (TITPMY) lie on the Extracellular side of the membrane. Residues 119 to 139 (TAFLIVLGPIGLFIAIFHSFL) traverse the membrane as a helical segment. The Cytoplasmic segment spans residues 140-208 (QANVFTLLFM…VKYMLGLSVL (69 aa)). A helical transmembrane segment spans residues 209 to 229 (FVLLVISFFPLIGPILFHILI). The Extracellular portion of the chain corresponds to 230–263 (SPFITQIYFTKVLRLQNFDNIQRRENIYLHAGQY). Residues 264–284 (ASFGFLAGLIESVPILAGFAI) traverse the membrane as a helical segment. Over 285 to 325 (STNTIGSVLFNLDHPMVPENLVETQAEIEAAPQDINQQPNQ) the chain is Cytoplasmic.

It belongs to the LDS family.

The protein localises to the prospore membrane. Its subcellular location is the lipid droplet. The protein resides in the spore wall. Involved in spore wall assembly. The protein is Outer spore wall protein LDS1 of Saccharomyces cerevisiae (strain ATCC 204508 / S288c) (Baker's yeast).